The following is a 385-amino-acid chain: MGRLFQLQEYCLRAMGHKDDMDSTDSTALSLKHISSLIFVISAQYPLISYVAYNRNDMEKVTACLSVVFTNMLTVIKISTFLANRKDFWEMIHRFRKMHEQSASHIPRYREGLDYVAEANKLASFLGRAYCVSCGLTGLYFMLGPIVKIGVCRWHGTTCDKELPMPMKFPFNDLESPGYEVCFLYTVLVTVVVVAYASAVDGLFISFAINLRAHFQTLQRQIENWEFPSSEPDTQIRLKSIVEYHVLLLSLSRKLRSIYTPTVMGQFVITSLQVGVIIYQLVTNMDSVMDLLLYASFFGSIMLQLFIYCYGGEIIKAESLQVDTAVRLSNWHLASPKTRTSLSLIILQSQKEVLIRAGFFVASLANFVGICRTALSLITLIKSIE.

The Cytoplasmic segment spans residues 1 to 32 (MGRLFQLQEYCLRAMGHKDDMDSTDSTALSLK). A helical membrane pass occupies residues 33–53 (HISSLIFVISAQYPLISYVAY). Residues 54 to 62 (NRNDMEKVT) lie on the Extracellular side of the membrane. The chain crosses the membrane as a helical span at residues 63 to 83 (ACLSVVFTNMLTVIKISTFLA). At 84–131 (NRKDFWEMIHRFRKMHEQSASHIPRYREGLDYVAEANKLASFLGRAYC) the chain is on the cytoplasmic side. Residues 132 to 152 (VSCGLTGLYFMLGPIVKIGVC) form a helical membrane-spanning segment. Topologically, residues 153-186 (RWHGTTCDKELPMPMKFPFNDLESPGYEVCFLYT) are extracellular. Residues 187–207 (VLVTVVVVAYASAVDGLFISF) traverse the membrane as a helical segment. Residues 208 to 257 (AINLRAHFQTLQRQIENWEFPSSEPDTQIRLKSIVEYHVLLLSLSRKLRS) are Cytoplasmic-facing. The helical transmembrane segment at 258–278 (IYTPTVMGQFVITSLQVGVII) threads the bilayer. Over 279 to 290 (YQLVTNMDSVMD) the chain is Extracellular. Residues 291 to 311 (LLLYASFFGSIMLQLFIYCYG) form a helical membrane-spanning segment. The Cytoplasmic segment spans residues 312-357 (GEIIKAESLQVDTAVRLSNWHLASPKTRTSLSLIILQSQKEVLIRA). The chain crosses the membrane as a helical span at residues 358–378 (GFFVASLANFVGICRTALSLI). Residues 379 to 385 (TLIKSIE) lie on the Extracellular side of the membrane.

It belongs to the insect chemoreceptor superfamily. Heteromeric odorant receptor channel (TC 1.A.69) family. Or1a subfamily. Interacts with Orco. Complexes exist early in the endomembrane system in olfactory sensory neurons (OSNs), coupling these complexes to the conserved ciliary trafficking pathway. Expressed in olfactory sensory neurons in the antenna.

It is found in the cell membrane. Odorant receptor which mediates acceptance or avoidance behavior, depending on its substrates. The odorant receptor repertoire encodes a large collection of odor stimuli that vary widely in identity, intensity, and duration. May form a complex with Orco to form odorant-sensing units, providing sensitive and prolonged odorant signaling and calcium permeability. This is Odorant receptor 82a (Or82a) from Drosophila melanogaster (Fruit fly).